The primary structure comprises 221 residues: uncharacterized protein (221 aa).

The first 23 residues, 1 to 23 (MNKLIQLALFFTLMLTGCSNSST), serve as a signal peptide directing secretion. The interval 67-221 (ELGKRKAKEE…QGYIDPEDAP (155 aa)) is disordered. A compositionally biased stretch (basic and acidic residues) spans 68 to 150 (LGKRKAKEEA…EQKANAEKKR (83 aa)). Residues 70–161 (KRKAKEEAEK…SQAQRQQTEA (92 aa)) adopt a coiled-coil conformation. Polar residues predominate over residues 152-161 (SQAQRQQTEA). A compositionally biased stretch (low complexity) spans 162–174 (PSSNSQDPPSSSS). Positions 175-184 (QTDKTIQQPA) are enriched in polar residues. A compositionally biased stretch (basic and acidic residues) spans 195 to 205 (YEERKKWHDDQ).

This is an uncharacterized protein from Bacillus subtilis (strain 168).